Consider the following 330-residue polypeptide: Aspartate--ammonia ligase (330 aa).

The protein belongs to the class-II aminoacyl-tRNA synthetase family. AsnA subfamily.

Its subcellular location is the cytoplasm. The catalysed reaction is L-aspartate + NH4(+) + ATP = L-asparagine + AMP + diphosphate + H(+). It functions in the pathway amino-acid biosynthesis; L-asparagine biosynthesis; L-asparagine from L-aspartate (ammonia route): step 1/1. In Salmonella newport (strain SL254), this protein is Aspartate--ammonia ligase.